A 715-amino-acid polypeptide reads, in one-letter code: Polyribonucleotide nucleotidyltransferase (715 aa).

D493 and D499 together coordinate Mg(2+). The KH domain occupies P560–I619. In terms of domain architecture, S1 motif spans G629–K697.

This sequence belongs to the polyribonucleotide nucleotidyltransferase family. The cofactor is Mg(2+).

It localises to the cytoplasm. The enzyme catalyses RNA(n+1) + phosphate = RNA(n) + a ribonucleoside 5'-diphosphate. Its function is as follows. Involved in mRNA degradation. Catalyzes the phosphorolysis of single-stranded polyribonucleotides processively in the 3'- to 5'-direction. This chain is Polyribonucleotide nucleotidyltransferase, found in Burkholderia lata (strain ATCC 17760 / DSM 23089 / LMG 22485 / NCIMB 9086 / R18194 / 383).